A 142-amino-acid chain; its full sequence is Large ribosomal subunit protein uL11 (142 aa).

It belongs to the universal ribosomal protein uL11 family. In terms of assembly, part of the ribosomal stalk of the 50S ribosomal subunit. Interacts with L10 and the large rRNA to form the base of the stalk. L10 forms an elongated spine to which L12 dimers bind in a sequential fashion forming a multimeric L10(L12)X complex. One or more lysine residues are methylated.

In terms of biological role, forms part of the ribosomal stalk which helps the ribosome interact with GTP-bound translation factors. This chain is Large ribosomal subunit protein uL11, found in Nitrobacter hamburgensis (strain DSM 10229 / NCIMB 13809 / X14).